The chain runs to 118 residues: Large ribosomal subunit protein bL19 (118 aa).

Belongs to the bacterial ribosomal protein bL19 family.

In terms of biological role, this protein is located at the 30S-50S ribosomal subunit interface and may play a role in the structure and function of the aminoacyl-tRNA binding site. This is Large ribosomal subunit protein bL19 from Parafrankia sp. (strain EAN1pec).